The primary structure comprises 257 residues: Steroid 5-alpha-reductase DET2 (257 aa).

A run of 6 helical transmembrane segments spans residues 11–31, 47–67, 78–97, 110–130, 151–171, and 200–220; these read FIVF…QFFT, ISPP…TIIV, LAFL…TIIY, FPLN…YIQS, IGLV…GVLL, and IMEW…AFFV.

Belongs to the steroid 5-alpha reductase family. As to expression, mostly expressed in leaves and hypocotyls and, to a lower extent, in stems, cotyledons, roots, seeds and callus.

Its subcellular location is the membrane. It catalyses the reaction a 3-oxo-5alpha-steroid + NADP(+) = a 3-oxo-Delta(4)-steroid + NADPH + H(+). It functions in the pathway plant hormone biosynthesis; brassinosteroid biosynthesis. Its activity is regulated as follows. Repressed by steroid (4-MA, VG106, PD91, PD17, Finasteride) and non-steroid (AS601811, AFA27, AFA76, AFA131, AFA192) inhibitors; steroid inhibitors are generally more efficient. Its function is as follows. Involved in a reduction step in the biosynthesis of the plant steroid, brassinolide (BL). Can use progesterone, testosterone, androstenedione and campestenone as substrate. This Solanum lycopersicum (Tomato) protein is Steroid 5-alpha-reductase DET2.